Reading from the N-terminus, the 824-residue chain is Leucine--tRNA ligase (824 aa).

Positions 42-52 match the 'HIGH' region motif; sequence PYPSGKIHMGH. The short motif at 581 to 585 is the 'KMSKS' region element; it reads KMSKS. Position 584 (K584) interacts with ATP.

It belongs to the class-I aminoacyl-tRNA synthetase family.

It localises to the cytoplasm. The enzyme catalyses tRNA(Leu) + L-leucine + ATP = L-leucyl-tRNA(Leu) + AMP + diphosphate. This chain is Leucine--tRNA ligase, found in Citrifermentans bemidjiense (strain ATCC BAA-1014 / DSM 16622 / JCM 12645 / Bem) (Geobacter bemidjiensis).